A 68-amino-acid chain; its full sequence is Small ribosomal subunit protein bS21 (68 aa).

Residues 36–68 (YEKPSEKRARERAAAVRRSRKLERKRAERDGIR) form a disordered region. The segment covering 37–49 (EKPSEKRARERAA) has biased composition (basic and acidic residues). A compositionally biased stretch (basic residues) spans 50-59 (AVRRSRKLER).

Belongs to the bacterial ribosomal protein bS21 family.

In Zymomonas mobilis subsp. mobilis (strain ATCC 31821 / ZM4 / CP4), this protein is Small ribosomal subunit protein bS21.